The primary structure comprises 128 residues: MAYVKERIYESMFIIAPNVPEEERENLVERVKKIIEERVKGKIDKVERMGMRKFAYEIKKFNEGDYTVIYFRCDGQNLQELENFYRVTPEIIRWQTFRRFDLEKKERKAQREKAAAEATESSEGGSED.

It belongs to the bacterial ribosomal protein bS6 family.

Its function is as follows. Binds together with bS18 to 16S ribosomal RNA. This is Small ribosomal subunit protein bS6 (rpsF) from Thermotoga maritima (strain ATCC 43589 / DSM 3109 / JCM 10099 / NBRC 100826 / MSB8).